A 277-amino-acid polypeptide reads, in one-letter code: Formamidopyrimidine-DNA glycosylase (277 aa).

Proline 2 (schiff-base intermediate with DNA) is an active-site residue. Glutamate 3 serves as the catalytic Proton donor. Residue lysine 58 is the Proton donor; for beta-elimination activity of the active site. DNA-binding residues include histidine 97, arginine 116, and arginine 158. The FPG-type zinc-finger motif lies at asparagine 243–arginine 277. The active-site Proton donor; for delta-elimination activity is the arginine 267.

The protein belongs to the FPG family. Monomer. The cofactor is Zn(2+).

It carries out the reaction Hydrolysis of DNA containing ring-opened 7-methylguanine residues, releasing 2,6-diamino-4-hydroxy-5-(N-methyl)formamidopyrimidine.. The enzyme catalyses 2'-deoxyribonucleotide-(2'-deoxyribose 5'-phosphate)-2'-deoxyribonucleotide-DNA = a 3'-end 2'-deoxyribonucleotide-(2,3-dehydro-2,3-deoxyribose 5'-phosphate)-DNA + a 5'-end 5'-phospho-2'-deoxyribonucleoside-DNA + H(+). Functionally, involved in base excision repair of DNA damaged by oxidation or by mutagenic agents. Acts as a DNA glycosylase that recognizes and removes damaged bases. Has a preference for oxidized purines, such as 7,8-dihydro-8-oxoguanine (8-oxoG). Has AP (apurinic/apyrimidinic) lyase activity and introduces nicks in the DNA strand. Cleaves the DNA backbone by beta-delta elimination to generate a single-strand break at the site of the removed base with both 3'- and 5'-phosphates. This is Formamidopyrimidine-DNA glycosylase from Alkalilimnicola ehrlichii (strain ATCC BAA-1101 / DSM 17681 / MLHE-1).